The primary structure comprises 276 residues: Caspase-6 (276 aa).

Positions 1-5 (MTETD) are excised as a propeptide. Residues 25-27 (KRR) are tri-arginine exosite. Ser62 is subject to Phosphoserine. The active site involves His104. The segment at 108–125 (NHVYAYDAKIEIQTLTGL) is 130's region. The active site involves Cys146. Residues 163-175 (HQTDKLDNVTQVD) constitute a propeptide that is removed on maturation. Position 239 is a phosphoserine (Ser239). S-palmitoyl cysteine attachment occurs at residues Cys246 and Cys259.

It belongs to the peptidase C14A family. In terms of assembly, heterotetramer that consists of two anti-parallel arranged heterodimers, each one formed by a 18 kDa (p18) and a 11 kDa (p11) subunit. Interacts with BIRC6/bruce. Interacts with RIPK3. As to quaternary structure, heterotetramer that consists of two anti-parallel arranged heterodimers, each one formed by a 18 kDa (Caspase-6 subunit p18) and a 11 kDa (Caspase-6 subunit p11) subunit. In terms of processing, phosphorylated by NUAK1; phosphorylation inhibits self-activation. Phosphorylation at Ser-239 by AMP-activated protein kinase (PRKAA1 or PRKAA2) inhibits autocleavage, preventing caspase activation, thereby preventing hepatocyte apoptosis. Palmitoylation by ZDHHC17 blocks dimerization and subsequent activation, leading to inhibit the cysteine protease activity. Post-translationally, can be cleaved and activated by different caspases, depending on the context. Cleaved and activated by caspase-8 (CASP8) and subsequently by caspase-3 (CASP3). Can also undergo autoactivation by mediating autocleavage at Asp-162 and Asp-175, while it is not able to cleave its N-terminal disordered prodomain. Cleaved and activated by CASP1, possibly in the context of inflammation. As to expression, highly expressed in lung, liver, kidney, testis, and heart. Lower levels in spleen, skeletal muscle and brain. Expressed in neurons.

The protein localises to the cytoplasm. The protein resides in the nucleus. The enzyme catalyses Strict requirement for Asp at position P1 and has a preferred cleavage sequence of Val-Glu-His-Asp-|-.. With respect to regulation, during activation, the N-terminal disordered prodomain is removed by cleavage. Concomitantly, double cleavage gives rise to a large 18-kDa and a small 11-kDa subunit. The two large and two small subunits then assemble to form the active CASP6 complex. Can be cleaved and activated by different caspases, depending on the context. Cleaved and activated by caspase-8 (CASP8) and subsequently by caspase-3 (CASP3). Can also undergo autoactivation by mediating autocleavage at Asp-162 and Asp-175, while it is not able to cleave its N-terminal disordered prodomain. Intramolecular cleavage at Asp-175 is a prerequisite for CASP6 self-activation. Cleaved and activated by CASP1 in neurons, possibly in the context of inflammation. Phosphorylation at Ser-239 inhibits autocleavage, preventing caspase activation. Functionally, cysteine protease that plays essential roles in programmed cell death, axonal degeneration, development and innate immunity. Acts as a non-canonical executioner caspase during apoptosis: localizes in the nucleus and cleaves the nuclear structural protein NUMA1 and lamin A/LMNA thereby inducing nuclear shrinkage and fragmentation. Lamin-A/LMNA cleavage is required for chromatin condensation and nuclear disassembly during apoptotic execution. Acts as a regulator of liver damage by promoting hepatocyte apoptosis: in absence of phosphorylation by AMP-activated protein kinase (AMPK), catalyzes cleavage of BID, leading to cytochrome c release, thereby participating in nonalcoholic steatohepatitis. Cleaves PARK7/DJ-1 in cells undergoing apoptosis. Involved in intrinsic apoptosis by mediating cleavage of RIPK1. Furthermore, cleaves many transcription factors such as NF-kappa-B and cAMP response element-binding protein/CREBBP. Cleaves phospholipid scramblase proteins XKR4 and XKR9. In addition to apoptosis, involved in different forms of programmed cell death. Plays an essential role in defense against viruses by acting as a central mediator of the ZBP1-mediated pyroptosis, apoptosis, and necroptosis (PANoptosis), independently of its cysteine protease activity. PANoptosis is a unique inflammatory programmed cell death, which provides a molecular scaffold that allows the interactions and activation of machinery required for inflammasome/pyroptosis, apoptosis and necroptosis. Mechanistically, interacts with RIPK3 and enhances the interaction between RIPK3 and ZBP1, leading to ZBP1-mediated inflammasome activation and cell death. Plays an essential role in axon degeneration during axon pruning which is the remodeling of axons during neurogenesis but not apoptosis. Regulates B-cell programs both during early development and after antigen stimulation. In terms of biological role, (Microbial infection) Proteolytically cleaves the N protein of coronaviruses. The cleavage leads to two fragments and modulates coronavirus replication by regulating IFN signaling. The two fragments produced by the cleavage interact with IRF3 inhibiting its nuclear translocation after activation and reduce the expression of IFNB and IFN-stimulated genes. This chain is Caspase-6, found in Mus musculus (Mouse).